The following is a 119-amino-acid chain: Protein MRP-126 (119 aa).

EF-hand domains are found at residues 23–58 and 59–94; these read DVFH…LKHV and KNQV…VTVA. Positions 37, 42, 72, 74, 76, 78, and 83 each coordinate Ca(2+).

Belongs to the S-100 family. Expressed in v-myb-transformed myelomonocytic cells.

This is Protein MRP-126 from Gallus gallus (Chicken).